We begin with the raw amino-acid sequence, 177 residues long: Glutamyl-tRNA(Gln) amidotransferase subunit F, mitochondrial (177 aa).

The transit peptide at 1–16 directs the protein to the mitochondrion; sequence MIRINSRGLTVSTRRF. Residues 148-177 are disordered; it reads PAKGETQGSFNVANMNPRNRPFATIRSKQG. Over residues 153–164 the composition is skewed to polar residues; sequence TQGSFNVANMNP.

This sequence belongs to the GatF family. In terms of assembly, subunit of the heterotrimeric GatFAB amidotransferase (AdT) complex, composed of A, B and F subunits.

The protein localises to the mitochondrion inner membrane. It catalyses the reaction L-glutamyl-tRNA(Gln) + L-glutamine + ATP + H2O = L-glutaminyl-tRNA(Gln) + L-glutamate + ADP + phosphate + H(+). In terms of biological role, allows the formation of correctly charged Gln-tRNA(Gln) through the transamidation of misacylated Glu-tRNA(Gln) in the mitochondria. The reaction takes place in the presence of glutamine and ATP through an activated gamma-phospho-Glu-tRNA(Gln). Required for proper protein synthesis within the mitochondrion. This is Glutamyl-tRNA(Gln) amidotransferase subunit F, mitochondrial from Scheffersomyces stipitis (strain ATCC 58785 / CBS 6054 / NBRC 10063 / NRRL Y-11545) (Yeast).